The primary structure comprises 198 residues: Glycerol-3-phosphate acyltransferase (198 aa).

The next 5 helical transmembrane spans lie at 2-22 (YAVL…AYIF), 48-70 (LGYK…AVLI), 75-97 (MGNT…PVFL), 111-131 (VVMT…VTVI), and 154-174 (IFWN…LAIF).

It belongs to the PlsY family. Probably interacts with PlsX.

It localises to the cell membrane. The enzyme catalyses an acyl phosphate + sn-glycerol 3-phosphate = a 1-acyl-sn-glycero-3-phosphate + phosphate. It participates in lipid metabolism; phospholipid metabolism. Catalyzes the transfer of an acyl group from acyl-phosphate (acyl-PO(4)) to glycerol-3-phosphate (G3P) to form lysophosphatidic acid (LPA). This enzyme utilizes acyl-phosphate as fatty acyl donor, but not acyl-CoA or acyl-ACP. The sequence is that of Glycerol-3-phosphate acyltransferase from Thermoanaerobacter sp. (strain X514).